Reading from the N-terminus, the 1181-residue chain is Putative primase (1181 aa).

The tract at residues 1141 to 1181 (RSHSTMVEHDMDDDESTNKKQELEEEDEECIDIDEYNNERF) is disordered. Acidic residues predominate over residues 1163–1181 (LEEEDEECIDIDEYNNERF).

The protein belongs to the eukaryotic-type primase small subunit family.

Functionally, synthesizes small RNA primers for the Okazaki fragments on both template strands at replication forks during viral DNA synthesis. The protein is Putative primase of Magallana gigas (Pacific oyster).